We begin with the raw amino-acid sequence, 580 residues long: High affinity choline transporter 1 (580 aa).

Topologically, residues 1–6 (MPFHVE) are extracellular. A helical transmembrane segment spans residues 7–27 (GLVAIILFYLLIFLVGIWAAW). Residues 28–48 (KTKNSGNAEERSEAIIVGGRD) are Cytoplasmic-facing. The chain crosses the membrane as a helical span at residues 49–69 (IGLLVGGFTMTATWVGGGYIN). Residues 70–81 (GTAEAVYGPGCG) are Extracellular-facing. A helical transmembrane segment spans residues 82–102 (LAWAQAPIGYSLSLILGGLFF). The Cytoplasmic portion of the chain corresponds to 103–125 (AKPMRSKGYVTMLDPFQQIYGKR). A helical membrane pass occupies residues 126–146 (MGGLLFIPALMGEMFWAAAIF). Residues 147-164 (SALGATISVIIDVDVNIS) are Extracellular-facing. Residues 165 to 185 (VIVSALIAILYTLVGGLYSVA) form a helical membrane-spanning segment. The Cytoplasmic portion of the chain corresponds to 186-191 (YTDVVQ). A helical transmembrane segment spans residues 192-212 (LFCIFIGLWISVPFALSHPAV). The Extracellular segment spans residues 213–237 (TDIGFTAVHAKYQSPWLGTIESVEV). A helical membrane pass occupies residues 238–258 (YTWLDNFLLLMLGGIPWQAYF). Residues 259–274 (QRVLSSSSATYAQVLS) are Cytoplasmic-facing. Residues 275-295 (FLAAFGCLVMALPAICIGAIG) form a helical membrane-spanning segment. The Extracellular segment spans residues 296–317 (ASTDWNQTAYGFPDPKTKEEAD). N-linked (GlcNAc...) asparagine glycosylation occurs at N301. A helical transmembrane segment spans residues 318–338 (MILPIVLQYLCPVYISFFGLG). Residues 339–376 (AVSAAVMSSADSSILSASSMFARNIYQLSFRQNASDKE) are Cytoplasmic-facing. Residues 377–397 (IVWVMRITVFVFGASATAMAL) traverse the membrane as a helical segment. At 398 to 406 (LTKTVYGLW) the chain is on the extracellular side. The chain crosses the membrane as a helical span at residues 407 to 427 (YLSSDLVYIIIFPQLLCVLFI). Topologically, residues 428–435 (KGTNTYGA) are cytoplasmic. The chain crosses the membrane as a helical span at residues 436 to 456 (VAGYIFGLFLRITGGEPYLYL). The Extracellular portion of the chain corresponds to 457–481 (QPLIFYPGYYPDKNGIYNQRFPFKT). The helical transmembrane segment at 482 to 502 (LSMVTSFFTNICVSYLAKYLF) threads the bilayer. The segment at 502–580 (FESGTLPPKL…EGSGTEDNLQ (79 aa)) is mediates interaction with SEC14L1. The Cytoplasmic portion of the chain corresponds to 503-580 (ESGTLPPKLD…EGSGTEDNLQ (78 aa)). The Dileucine-like motif signature appears at 527–532 (DKTILV).

It belongs to the sodium:solute symporter (SSF) (TC 2.A.21) family. Homooligomerizes at cell surface. Interacts with SEC14L1; may regulate SLC5A7. In terms of processing, phosphorylated. As to expression, expressed in basal forebrain, brain stem, spinal chord, and striatum. Specific for cholinergic neurons.

Its subcellular location is the presynaptic cell membrane. The protein resides in the cell projection. The protein localises to the axon. It is found in the early endosome membrane. It localises to the cytoplasmic vesicle. Its subcellular location is the secretory vesicle. The protein resides in the synaptic vesicle membrane. The catalysed reaction is choline(out) + n Na(+)(out) = choline(in) + n Na(+)(in). With respect to regulation, choline uptake activity is regulated by SLC5A7/CHT1 internalization (inactive form) from the cell surface and recycling of internalized SLC5A7/CHT1 into the cell surface (active form). Activated by extracellular chloride ion. Specifically inhibited by nanomolar concentrations of hemicholinium 3. In terms of biological role, high-affinity Na(+)-coupled choline transmembrane symporter. Functions as an electrogenic, voltage-dependent transporter with variable charge/choline stoichiometry. Choline uptake and choline-induced current is also Cl(-)-dependent where Cl(-) is likely a regulatory ion rather than cotransported ion. Plays a critical role in acetylcholine (ACh) synthesis by taking up the substrate choline from the synaptic cleft into the presynaptic nerve terminals after neurotransmitter release. SLC5A7/CHT1-mediated choline high-affinity transport in cholinergic neurons is the rate-limiting step for production of ACh, thereby facilitating communication by subsequent action potentials. Localized predominantly in presynaptic terminal intracellular organelles, and translocated to the plasma membrane in active form in response to neuronal activity. In Rattus norvegicus (Rat), this protein is High affinity choline transporter 1.